Consider the following 885-residue polypeptide: DNA polymerase eta (885 aa).

The 257-residue stretch at 18–274 (VLLVDMDCFF…LPVGKIKGLG (257 aa)) folds into the UmuC domain. Residues aspartate 22 and methionine 23 each coordinate Mg(2+). Positions 22 and 23 each coordinate Mn(2+). Residue arginine 70 coordinates a 2'-deoxyribonucleoside 5'-triphosphate. Mg(2+) is bound by residues aspartate 125 and glutamate 126. Mn(2+)-binding residues include aspartate 125 and glutamate 126. Residue glutamate 126 is part of the active site. Disordered stretches follow at residues 599–653 (AIEA…DLYV) and 658–677 (VPPT…RKFD). A compositionally biased stretch (acidic residues) spans 608–618 (FEEDTEEETEL). The segment covering 628 to 649 (EGQSSDAGQEQDPNTLNDSTGN) has biased composition (polar residues). Residues 701-737 (DILPTIKCDQCGANIPDEVKSLQTHRDHHFAQELSRT) form a UBZ3-type 1 zinc finger. Zn(2+) contacts are provided by cysteine 708, cysteine 711, histidine 725, and histidine 729. Residues 722–783 (LQTHRDHHFA…YSTAPPSNSI (62 aa)) are disordered. The segment covering 739-748 (RSTEREERTQ) has biased composition (basic and acidic residues). Residues 766 to 780 (TAGSGSSSYSTAPPS) are compositionally biased toward low complexity. The UBZ3-type 2 zinc finger occupies 798 to 832 (SDPQMNQCPECKAFIKCVDMPEHLDYHVARNLQRE). Positions 805, 808, 820, and 824 each coordinate Zn(2+). The disordered stretch occupies residues 846-870 (NKEKISPVQPKKQSQKKLNSTISAS).

It belongs to the DNA polymerase type-Y family. Interacts (via C-terminus) with nopo. Mg(2+) is required as a cofactor. Mn(2+) serves as cofactor. Ubiquitination enhanced by nopo. As to expression, expressed in ovaries and testes.

The protein localises to the nucleus. The enzyme catalyses DNA(n) + a 2'-deoxyribonucleoside 5'-triphosphate = DNA(n+1) + diphosphate. With respect to regulation, the enzyme in complex with the DNA substrate binds a third divalent metal cation. This binding is essential for catalyzing the DNA synthesis. DNA polymerase specifically involved in the DNA repair by translesion synthesis (TLS). Plays an important role in translesion synthesis, where the normal high-fidelity DNA polymerases cannot proceed and DNA synthesis stalls. Inserts one or 2 nucleotide(s) opposite the lesion. During homologous recombination (HR) repair, has a overlapping role with the error-prone translesion polymerase PolZ1/DNApol-zeta to initiate repair synthesis that is completed by end joining or another polymerase that can bind and reinitiate synthesis. Particularly important for the repair of UV-induced pyrimidine dimers and for hydroxyurea (HU)-induced DNA damage. Although inserts the correct base, may cause base transitions and transversions depending upon the context. Forms a Schiff base with 5'-deoxyribose phosphate at abasic sites, but does not have any lyase activity, preventing the release of the 5'-deoxyribose phosphate (5'-dRP) residue. This covalent trapping of the enzyme by the 5'-dRP residue inhibits its DNA synthetic activity during base excision repair, thereby avoiding high incidence of mutagenesis. The polypeptide is DNA polymerase eta (Drosophila melanogaster (Fruit fly)).